A 430-amino-acid chain; its full sequence is Trigger factor (430 aa).

The PPIase FKBP-type domain occupies 163–248 (GNIAIIDFKG…IKDIKVKELP (86 aa)).

Belongs to the FKBP-type PPIase family. Tig subfamily.

Its subcellular location is the cytoplasm. The enzyme catalyses [protein]-peptidylproline (omega=180) = [protein]-peptidylproline (omega=0). Functionally, involved in protein export. Acts as a chaperone by maintaining the newly synthesized protein in an open conformation. Functions as a peptidyl-prolyl cis-trans isomerase. The chain is Trigger factor from Clostridium botulinum (strain Loch Maree / Type A3).